A 274-amino-acid chain; its full sequence is Centriolar and ciliogenesis-associated protein hyls-1 (274 aa).

Disordered regions lie at residues 156 to 188 (RSSV…SSRP) and 255 to 274 (NNED…PYID). Residues 171–183 (VGLSTETEQSELQ) are compositionally biased toward polar residues. The span at 257 to 274 (EDWKANHDKDWSPRPYID) shows a compositional bias: basic and acidic residues.

The protein belongs to the HYLS1 family. Interacts with sas-4; leading to its localization into newly forming centrioles.

The protein resides in the cytoplasm. It is found in the cytoskeleton. Its subcellular location is the microtubule organizing center. It localises to the centrosome. The protein localises to the centriole. The protein resides in the cell projection. It is found in the cilium. Plays an important role in ciliogenesis. This chain is Centriolar and ciliogenesis-associated protein hyls-1, found in Caenorhabditis elegans.